A 322-amino-acid chain; its full sequence is Elongation factor P--(R)-beta-lysine ligase (322 aa).

72–74 contacts substrate; that stretch reads SPE. ATP contacts are provided by residues 96 to 98 and Asn106; that span reads RNN. Residue Tyr115 participates in substrate binding. 241 to 242 provides a ligand contact to ATP; sequence EL. Substrate is bound at residue Glu248. ATP is bound at residue Gly297.

This sequence belongs to the class-II aminoacyl-tRNA synthetase family. EpmA subfamily. Homodimer.

The catalysed reaction is D-beta-lysine + L-lysyl-[protein] + ATP = N(6)-((3R)-3,6-diaminohexanoyl)-L-lysyl-[protein] + AMP + diphosphate + H(+). Its function is as follows. With EpmB is involved in the beta-lysylation step of the post-translational modification of translation elongation factor P (EF-P). Catalyzes the ATP-dependent activation of (R)-beta-lysine produced by EpmB, forming a lysyl-adenylate, from which the beta-lysyl moiety is then transferred to the epsilon-amino group of a conserved specific lysine residue in EF-P. The polypeptide is Elongation factor P--(R)-beta-lysine ligase (Buchnera aphidicola subsp. Baizongia pistaciae (strain Bp)).